Here is a 679-residue protein sequence, read N- to C-terminus: Methionine--tRNA ligase (679 aa).

The 'HIGH' region motif lies at 14-24 (PYANGSIHLGH). Zn(2+) is bound by residues Cys145, Cys148, Cys158, and Cys161. The 'KMSKS' region signature appears at 331-335 (KMSKS). Lys334 lines the ATP pocket. In terms of domain architecture, tRNA-binding spans 577-679 (TFAAVDLRVA…SGAKPGQRIK (103 aa)).

Belongs to the class-I aminoacyl-tRNA synthetase family. MetG type 1 subfamily. Homodimer. The cofactor is Zn(2+).

The protein resides in the cytoplasm. It catalyses the reaction tRNA(Met) + L-methionine + ATP = L-methionyl-tRNA(Met) + AMP + diphosphate. Is required not only for elongation of protein synthesis but also for the initiation of all mRNA translation through initiator tRNA(fMet) aminoacylation. This chain is Methionine--tRNA ligase, found in Pseudomonas entomophila (strain L48).